We begin with the raw amino-acid sequence, 2572 residues long: Zinc finger homeobox protein 2 (2572 aa).

2 disordered regions span residues 1-107 and 343-425; these read MATL…GLPP and LSPP…ADDY. The segment covering 8-36 has biased composition (low complexity); that stretch reads STTGTTPSPGHNAPSLPSDTFSSSTPSDP. 2 stretches are compositionally biased toward polar residues: residues 44–53 and 389–398; these read ASSTSENMRS and LNQSSPTSKE. C2H2-type zinc fingers lie at residues 453-476 and 508-532; these read LKCP…REKH and YRCD…SDKH. Disordered stretches follow at residues 537–566, 608–655, and 675–710; these read QGFQ…PKTK, LPPG…LRPD, and RKFP…SPPP. The segment covering 615 to 628 has biased composition (pro residues); sequence PGPPPPPGATPTSP. The segment covering 696 to 705 has biased composition (low complexity); sequence LLGSSSDSLP. C2H2-type zinc fingers lie at residues 821–845 and 870–894; these read LRCN…GAAH and YHCL…TPAH. The disordered stretch occupies residues 929–974; the sequence is QLRTPGKAPVTPLAEPPTPEKDAQNKTEQLASEETENKTGPSRDSA. A compositionally biased stretch (polar residues) spans 954-974; it reads KTEQLASEETENKTGPSRDSA. The C2H2-type 5 zinc finger occupies 1009 to 1032; the sequence is YRCPLCQEQLVGRPALHFHLSHLH. The segment at 1061–1171 is disordered; the sequence is PTLSPLDNGQ…PAPADSRHPL (111 aa). A compositionally biased stretch (pro residues) spans 1120 to 1132; it reads GQPPSPAPSPVPE. 2 consecutive C2H2-type zinc fingers follow at residues 1191-1217 and 1248-1272; these read YKCT…SHLH and FKCT…SVLH. 3 disordered regions span residues 1269–1325, 1389–1408, and 1415–1434; these read SVLH…FLSP, LPAA…LAER, and MAKE…LPNE. The span at 1279-1311 shows a compositional bias: basic and acidic residues; that stretch reads TKTDSKIEGPERSQEEPKEGETEGEVGTEKKGP. The segment covering 1392–1401 has biased composition (pro residues); it reads ATPPPPPQPP. Residues 1480–1503 form a C2H2-type 8 zinc finger; sequence LACGACGKLFSNMLILKTHEEHVH. The interval 1528-1591 is disordered; sequence PPLAEPPKPP…SSRGNLPPLV (64 aa). Positions 1595–1654 form a DNA-binding region, homeobox 1; it reads RRFSRTKFTEFQTQALQSFFETSAYPKDGEVERLASLLGLASRVVVVWFQNARQKARKNA. Residues 1670–1696 form a C2H2-type 9; degenerate zinc finger; sequence SGCRRCHATFSCVFELVRHLKKCYDDQ. Residues 1696 to 1724 are compositionally biased toward acidic residues; the sequence is QTLEEEEEEAERGEEEEEVEEEEVEEEQG. Disordered stretches follow at residues 1696 to 1769, 1820 to 1860, 1912 to 2065, 2268 to 2327, and 2398 to 2431; these read QTLE…SPAH, AATS…DKRL, ERKG…GMGQ, VQTA…NDAL, and NALL…EAGE. Over residues 1728 to 1738 the composition is skewed to pro residues; that stretch reads PAGPEGPLPEP. Residues 1769-1791 form a C2H2-type 10 zinc finger; it reads HTCDQCAISFSSQDLLTSHRRLH. Positions 1857 to 1916 form a DNA-binding region, homeobox 2; the sequence is DKRLRTTILPEQLEILYRWYMQDSNPTRKMLDCISEEVGLKKRVVQVWFQNTRARERKGQ. Residues 1925-1939 show a composition bias toward low complexity; that stretch reads PSPAVKPPATATPAS. A compositionally biased stretch (basic and acidic residues) spans 1949 to 1963; the sequence is KVDDGTGREAPKREA. Over residues 1991 to 2004 the composition is skewed to pro residues; sequence TPEPPLPLLPPPPP. The span at 2017-2044 shows a compositional bias: low complexity; the sequence is SPESEACSLSAGDLSDSSASSLAEPESP. Over residues 2045-2061 the composition is skewed to gly residues; sequence GAGGTSGGPGGGTGVPD. A DNA-binding region (homeobox 3) is located at residues 2065-2124; sequence QRRYRTQMSSLQLKIMKACYEAYRTPTMQECEVLGEEIGLPKRVIQVWFQNARAKEKKAK. The span at 2284 to 2293 shows a compositional bias: polar residues; the sequence is DQTNTSTAGT. Residues 2305 to 2315 show a composition bias toward basic and acidic residues; it reads LGDKVSSERKP. The span at 2402-2422 shows a compositional bias: pro residues; it reads QPPPQPPEPTATAPPKPPELP. The C2H2-type 11; degenerate zinc-finger motif lies at 2451–2471; it reads YLCRQCKMAFDGEAPATAHQR. A C2H2-type 12 zinc finger spans residues 2495-2519; it reads YHCLACEVLLSGREALASHLRSSAH. The interval 2551 to 2572 is disordered; sequence EARLPHTDSNPKTTTTSTLLAL. The span at 2563–2572 shows a compositional bias: low complexity; the sequence is TTTTSTLLAL.

Its subcellular location is the nucleus. Its function is as follows. Transcriptional regulator that is critical for the regulation of pain perception and processing of noxious stimuli. The polypeptide is Zinc finger homeobox protein 2 (ZFHX2) (Homo sapiens (Human)).